Consider the following 31-residue polypeptide: Cytochrome b6-f complex subunit 6 (31 aa).

Residues 4 to 24 traverse the membrane as a helical segment; sequence LISYISLLAGFVIIASVFYLA.

The protein belongs to the PetL family. As to quaternary structure, the 4 large subunits of the cytochrome b6-f complex are cytochrome b6, subunit IV (17 kDa polypeptide, PetD), cytochrome f and the Rieske protein, while the 4 small subunits are PetG, PetL, PetM and PetN. The complex functions as a dimer.

The protein localises to the plastid. It is found in the chloroplast thylakoid membrane. Component of the cytochrome b6-f complex, which mediates electron transfer between photosystem II (PSII) and photosystem I (PSI), cyclic electron flow around PSI, and state transitions. PetL is important for photoautotrophic growth as well as for electron transfer efficiency and stability of the cytochrome b6-f complex. The chain is Cytochrome b6-f complex subunit 6 from Tupiella akineta (Green alga).